The sequence spans 455 residues: Ribulose bisphosphate carboxylase large chain (455 aa).

Residue lysine 5 is modified to N6,N6,N6-trimethyllysine. Substrate contacts are provided by asparagine 114 and threonine 164. Lysine 166 functions as the Proton acceptor in the catalytic mechanism. Lysine 168 is a binding site for substrate. Mg(2+) is bound by residues lysine 192, aspartate 194, and glutamate 195. Position 192 is an N6-carboxylysine (lysine 192). Histidine 285 acts as the Proton acceptor in catalysis. Substrate contacts are provided by arginine 286, histidine 318, and serine 370.

Belongs to the RuBisCO large chain family. Type I subfamily. Heterohexadecamer of 8 large chains and 8 small chains; disulfide-linked. The disulfide link is formed within the large subunit homodimers. Requires Mg(2+) as cofactor. In terms of processing, the disulfide bond which can form in the large chain dimeric partners within the hexadecamer appears to be associated with oxidative stress and protein turnover.

The protein localises to the plastid. Its subcellular location is the chloroplast. The catalysed reaction is 2 (2R)-3-phosphoglycerate + 2 H(+) = D-ribulose 1,5-bisphosphate + CO2 + H2O. It catalyses the reaction D-ribulose 1,5-bisphosphate + O2 = 2-phosphoglycolate + (2R)-3-phosphoglycerate + 2 H(+). Its function is as follows. RuBisCO catalyzes two reactions: the carboxylation of D-ribulose 1,5-bisphosphate, the primary event in carbon dioxide fixation, as well as the oxidative fragmentation of the pentose substrate in the photorespiration process. Both reactions occur simultaneously and in competition at the same active site. The protein is Ribulose bisphosphate carboxylase large chain of Lupinus digitatus (Lupine).